A 215-amino-acid chain; its full sequence is N-(5'-phosphoribosyl)anthranilate isomerase (215 aa).

Belongs to the TrpF family.

It catalyses the reaction N-(5-phospho-beta-D-ribosyl)anthranilate = 1-(2-carboxyphenylamino)-1-deoxy-D-ribulose 5-phosphate. The protein operates within amino-acid biosynthesis; L-tryptophan biosynthesis; L-tryptophan from chorismate: step 3/5. The chain is N-(5'-phosphoribosyl)anthranilate isomerase from Paramagnetospirillum magneticum (strain ATCC 700264 / AMB-1) (Magnetospirillum magneticum).